A 143-amino-acid chain; its full sequence is Protein SLC31A2 (143 aa).

Over 1–22 (MAMHFIFSDTAVLLFDFWSVHS) the chain is Extracellular. A helical membrane pass occupies residues 23-43 (PAGMALSVLVLLLLAVLYEGI). Residues 44–93 (KVGKAKLLNQVLVNLPTSISQQTIAETDGDSAGSDSFPVGRTHHRWYLCH) are Cytoplasmic-facing. Phosphoserine is present on serine 77. A helical transmembrane segment spans residues 94–114 (FGQSLIHVIQVVIGYFIMLAV). Over 115 to 119 (MSYNT) the chain is Extracellular. Residues 120-140 (WIFLGVVLGSAVGYYLAYPLL) form a helical membrane-spanning segment. At 141 to 143 (STA) the chain is on the cytoplasmic side.

This sequence belongs to the copper transporter (Ctr) (TC 1.A.56) family. SLC31A subfamily. Oligomer. Interacts with SLC31A1; this interaction stabilizes SLC31A2 and protects it from ubiquitination and the subsequent degradation. Post-translationally, ubiquitinated; ubiquitination and the subsequent proteasomal degradation are prevent by SLC31A1 that stabilizes it. As to expression, ubiquitous with high expression in placenta and heart.

Its subcellular location is the membrane. The protein resides in the cytoplasmic vesicle membrane. It is found in the late endosome membrane. The protein localises to the lysosome membrane. Its function is as follows. Does not function as a copper(1+) importer in vivo. However, in vitro functions as a low-affinity copper(1+) importer. Regulator of SLC31A1 which facilitates the cleavage of the SLC31A1 ecto-domain or which stabilizes the truncated form of SLC31A1 (Truncated CTR1 form), thereby drives the SLC31A1 truncated form-dependent endosomal copper export and modulates the copper and cisplatin accumulation via SLC31A1. In Homo sapiens (Human), this protein is Protein SLC31A2.